The primary structure comprises 681 residues: Sodium-dependent phosphate transporter 1 (681 aa).

The next 6 helical transmembrane spans lie at 25–45 (NLWM…SVGA), 66–86 (ACIL…AKVS), 106–126 (LMAG…VASF), 162–182 (IVMS…ILFF), 201–221 (ALPI…MYTG), and 234–254 (GTIL…WFFV). The interval 266 to 295 (VKSSPSESPLMEKKSNLKEDHEETKMAPGD) is disordered. 2 positions are modified to phosphoserine: S269 and S273. Residues 275–295 (LMEKKSNLKEDHEETKMAPGD) show a composition bias toward basic and acidic residues. A helical membrane pass occupies residues 514 to 534 (VSLLFQFLQILTACFGSFAHG). Residues 553 to 560 (KQEASTKA) form an a region. Helical transmembrane passes span 561–581 (ATPI…LWVW), 602–622 (FSIE…GLPI), and 652–672 (IFMA…AIMA).

The protein belongs to the inorganic phosphate transporter (PiT) (TC 2.A.20) family. As to expression, ubiquitously expressed.

Its subcellular location is the cell membrane. The enzyme catalyses 2 Na(+)(out) + phosphate(out) = 2 Na(+)(in) + phosphate(in). Sodium-phosphate symporter which preferentially transports the monovalent form of phosphate with a stoichiometry of two sodium ions per phosphate ion. May play a role in extracellular matrix and cartilage calcification as well as in vascular calcification. Essential for cell proliferation but this function is independent of its phosphate transporter activity. Its function is as follows. (Microbial infection) May function as a retroviral receptor but do not confer infection susceptibility to Gibbon Ape Leukemia Virus (GaLV), Simian sarcoma-associated virus (SSAV) and Feline leukemia virus subgroup B (FeLV-B). The chain is Sodium-dependent phosphate transporter 1 (Slc20a1) from Mus musculus (Mouse).